Consider the following 216-residue polypeptide: DNA repair and recombination protein RadB (216 aa).

Belongs to the eukaryotic RecA-like protein family. RadB subfamily.

In terms of biological role, involved in DNA repair and in homologous recombination. May regulate the cleavage reactions of the branch-structured DNA. Has a very weak ATPase activity that is not stimulated by DNA. Binds DNA but does not promote DNA strands exchange. This chain is DNA repair and recombination protein RadB, found in Methanococcus maripaludis (strain C5 / ATCC BAA-1333).